The primary structure comprises 211 residues: MAKTHEIKVERRADEGKGASRRLRHAGVIPAIVYGGELEPVSIQLNHEQIWLAQQNEWFYSSILDLNLNGDVQQVLLRDMQRHPFKQLIMHIDFQRVSANEKLSAAVPLHFINEASSPAGKSSEVVVTHELNEVQVVCLPKDLPEFIEVDLGALEVGNVIHLSEIKLPAGVEIPELKLGKEHDVAVVAAKHVRIEEDDAAGEEGSEGAETK.

The protein belongs to the bacterial ribosomal protein bL25 family. CTC subfamily. In terms of assembly, part of the 50S ribosomal subunit; part of the 5S rRNA/L5/L18/L25 subcomplex. Contacts the 5S rRNA. Binds to the 5S rRNA independently of L5 and L18.

This is one of the proteins that binds to the 5S RNA in the ribosome where it forms part of the central protuberance. The protein is Large ribosomal subunit protein bL25 of Xanthomonas axonopodis pv. citri (strain 306).